We begin with the raw amino-acid sequence, 240 residues long: Ribonuclease HII (240 aa).

Residues 27-226 form the RNase H type-2 domain; the sequence is GPVAGVDEAG…GETRSLRLED (200 aa). Residues Asp-33, Glu-34, and Asp-127 each contribute to the a divalent metal cation site.

Belongs to the RNase HII family. Mn(2+) is required as a cofactor. Requires Mg(2+) as cofactor.

It localises to the cytoplasm. It carries out the reaction Endonucleolytic cleavage to 5'-phosphomonoester.. Functionally, endonuclease that specifically degrades the RNA of RNA-DNA hybrids. This chain is Ribonuclease HII, found in Parafrankia sp. (strain EAN1pec).